Here is a 170-residue protein sequence, read N- to C-terminus: Photosystem I assembly protein Ycf3 (170 aa).

TPR repeat units lie at residues 35–68 (AFCYYRDGMSAQSEGEYAEALENYYEALRLEEDP), 72–105 (SYIIYNIGLIYASNGEHIKALEYYHQSLELNPRL), and 120–153 (GLKAADKQDNNMSKSMFDKAAEYWKQAIYLAPNN).

The protein belongs to the Ycf3 family.

The protein resides in the plastid. The protein localises to the chloroplast thylakoid membrane. Functionally, essential for the assembly of the photosystem I (PSI) complex. May act as a chaperone-like factor to guide the assembly of the PSI subunits. This Gracilaria tenuistipitata var. liui (Red alga) protein is Photosystem I assembly protein Ycf3.